We begin with the raw amino-acid sequence, 447 residues long: MTEPHVTVIGAGLAGSEAAWQAARLGVKVTLYEMRPHVTTAVHRTGLFAELVCSNSLRGAGLENAVGLLKEEMRRLGSLILREALQHAVPAGGALAVSREEFAAGVTAALTSHPNITVVREEVREIPPDGVVVIASGPLTSAPLAEAIRRFTGEESLAFYDAAAPIVNIETVNMDKVFRMSRYGKGEGDDYLNCPLTREEYEAFYEALVTAEKAMPHNPEDAQVCFFEGCLPVEEIARRGPDALRYGPMKPVGLIDPRTGRRPWAVVQLRQDNAAGTLYNMVGFQTSLKWSEQKRVFRMIPGLEEAEFERYGVIHRNTFMKSPRLLYPTGESRQRAGLFFAGQMTGVEGYVESAAGGLVAGINAARRALGLEPVTFPRETAIGSLLHYITHADPEHFQPMNIAFGLMPPLEGPKIRDKRARKRAISERALDVLAAWAPGHLGAPLLD.

10–15 is a binding site for FAD; sequence GAGLAG.

This sequence belongs to the MnmG family. TrmFO subfamily. It depends on FAD as a cofactor.

Its subcellular location is the cytoplasm. It carries out the reaction uridine(54) in tRNA + (6R)-5,10-methylene-5,6,7,8-tetrahydrofolate + NADH + H(+) = 5-methyluridine(54) in tRNA + (6S)-5,6,7,8-tetrahydrofolate + NAD(+). It catalyses the reaction uridine(54) in tRNA + (6R)-5,10-methylene-5,6,7,8-tetrahydrofolate + NADPH + H(+) = 5-methyluridine(54) in tRNA + (6S)-5,6,7,8-tetrahydrofolate + NADP(+). Functionally, catalyzes the folate-dependent formation of 5-methyl-uridine at position 54 (M-5-U54) in all tRNAs. The sequence is that of Methylenetetrahydrofolate--tRNA-(uracil-5-)-methyltransferase TrmFO from Symbiobacterium thermophilum (strain DSM 24528 / JCM 14929 / IAM 14863 / T).